Here is a 179-residue protein sequence, read N- to C-terminus: MSRIGKLPVKFSEKVTMKIDQDNIIVKGPKGELALGLSKNINITIENNTLFVKPVTKEPQVLKLFGTYRAIINNMVVGVTKGFEKRLELQGVGYRAQLQGKDLSLSVGYSHPVVIKAPTGINIAVENNTIVIISGISKELVGQIASNIRSIKPPEPYKGKGIRYVGEFVRKKAGKAGKK.

This sequence belongs to the universal ribosomal protein uL6 family. Part of the 50S ribosomal subunit.

It localises to the plastid. The protein resides in the chloroplast. Its function is as follows. Binds 23S rRNA. The polypeptide is Large ribosomal subunit protein uL6c (rpl6) (Guillardia theta (Cryptophyte)).